The following is a 497-amino-acid chain: Probable malate:quinone oxidoreductase (497 aa).

It belongs to the MQO family. The cofactor is FAD.

It carries out the reaction (S)-malate + a quinone = a quinol + oxaloacetate. It functions in the pathway carbohydrate metabolism; tricarboxylic acid cycle; oxaloacetate from (S)-malate (quinone route): step 1/1. The polypeptide is Probable malate:quinone oxidoreductase (Prochlorococcus marinus (strain MIT 9515)).